Reading from the N-terminus, the 361-residue chain is Elongator complex protein 4 (361 aa).

Disordered stretches follow at residues 93-124 and 338-361; these read QLPG…PQQE and DDEQ…SLDF. 2 stretches are compositionally biased toward polar residues: residues 104–121 and 346–355; these read NENS…SKNP and ISNTNPQKQP.

This sequence belongs to the ELP4 family. Component of the elongator complex.

It localises to the cytoplasm. The protein resides in the nucleus. It participates in tRNA modification; 5-methoxycarbonylmethyl-2-thiouridine-tRNA biosynthesis. Its function is as follows. Component of the elongator complex, a multiprotein complex which is required for multiple tRNA modifications, including mcm5U (5-methoxycarbonylmethyl uridine), mcm5s2U (5-methoxycarbonylmethyl-2-thiouridine), and ncm5U (5-carbamoylmethyl uridine). The elongator complex catalyzes formation of carboxymethyluridine in the wobble base at position 34 in tRNAs. The polypeptide is Elongator complex protein 4 (Schizosaccharomyces pombe (strain 972 / ATCC 24843) (Fission yeast)).